Here is a 775-residue protein sequence, read N- to C-terminus: MAPVGGGGRPVGGPARGRLLLAAPVLLVLLWALGARGQGSPQQGTIVGMRLASCNKSCGTNPDGIIFVSEGSTVNLRLYGYSLGNISSNLISFTEVDDAETLHKSTSCLELTKDLVVQQLVNVSRGNTSGVLVVLTKFLRRSESMKLYALCTRAQPDGPWLKWTDKDSLLFMVEEPGRFLPLWLHILLITVLLVLSGIFSGLNLGLMALDPMELRIVQNCGTEKERRYARKIEPIRRKGNYLLCSLLLGNVLVNTSLTILLDNLIGSGLMAVASSTIGIVIFGEILPQALCSRHGLAVGANTILLTKFFMLLTFPLSFPISKLLDFFLGQEIRTVYNREKLMEMLKVTEPYNDLVKEELNMIQGALELRTKTVEDIMTQLQDCFMIRSDAILDFNTMSEIMESGYTRIPVFEDEQSNIVDILYVKDLAFVDPDDCTPLKTITRFYNHPVHFVFHDTKLDAMLEEFKKGKSHLAIVQKVNNEGEGDPFYEVLGLVTLEDVIEEIIKSEILDESDMYTDNRSRKRVSEKNKRDFSAFKDADNELKVKISPQLLLAAHRFLATEVSQFSPSLISEKILLRLLKYPDVIQELKFDEHNKYYARHYLYTRNKPADYFILILQGKVEVEAGKENMKFETGAFSYYGTMALTSVPSDRSPAHPTPLSRSASLSYPDRTDVSTAATLAGSSNQFGSSVLGQYISDFSVRALVDLQYIKITRQQYQNGLLASRMENSPQFPIDGCTTHMENLAEKSELPVVDETTTLLNERNSLLHKASHENAI.

At Met1–Arg178 the chain is on the extracellular side. N-linked (GlcNAc...) asparagine glycosylation is found at Asn85 and Asn122. The 181-residue stretch at Arg178 to Glu358 folds into the CNNM transmembrane domain. The helical transmembrane segment at Phe179–Phe199 threads the bilayer. The Cytoplasmic segment spans residues Ser200–Asn240. Residues Tyr241–Leu261 constitute an intramembrane region (helical). Topologically, residues Asp262–Leu264 are cytoplasmic. Residues Ile265 to Ile285 form a helical membrane-spanning segment. At Leu286–Arg293 the chain is on the extracellular side. The chain crosses the membrane as a helical span at residues His294 to Leu316. Topologically, residues Ser317–Ile775 are cytoplasmic. 2 CBS domains span residues Met377 to Leu438 and Tyr445 to Glu511. Residues Ser660, Ser664, and Ser770 each carry the phosphoserine modification.

It belongs to the ACDP family. In terms of assembly, interacts with COX11. In terms of tissue distribution, widely expressed. Highly expressed in heart.

The protein localises to the cell membrane. Its function is as follows. Probable metal transporter. The interaction with the metal ion chaperone COX11 suggests that it may play a role in sensory neuron functions. May play a role in biomineralization and retinal function. This Homo sapiens (Human) protein is Metal transporter CNNM4 (CNNM4).